We begin with the raw amino-acid sequence, 858 residues long: Chitin synthase 2 (858 aa).

Positions 1 to 12 are enriched in basic and acidic residues; the sequence is MYPEGPKPEHDQ. Positions 1-116 are disordered; sequence MYPEGPKPEH…GQAPRRQPRR (116 aa). A compositionally biased stretch (polar residues) spans 15 to 24; it reads LQDTQFSNQP. 2 stretches are compositionally biased toward pro residues: residues 52–68 and 76–89; these read AYPPTQYPTSPPPPNFP and PYPPFNNNPSPVSP. 7 helical membrane passes run 500–517, 540–560, 586–606, 621–641, 665–685, 799–819, and 825–845; these read RWLNGSFFAGVYALYHWR, TYNLIFSWFALGNFYLTFFIL, LHTVFNYIYIVLIVIQFIMAL, MVFFAILMVYMMFAAIWITVV, NIIISLCATYVMYFVSSFMFL, VLAWIISNLALVVAIANTTVI, and ASIYLGFILWSVAGLSVIRFT.

The protein belongs to the chitin synthase family.

The protein localises to the cell membrane. It catalyses the reaction [(1-&gt;4)-N-acetyl-beta-D-glucosaminyl](n) + UDP-N-acetyl-alpha-D-glucosamine = [(1-&gt;4)-N-acetyl-beta-D-glucosaminyl](n+1) + UDP + H(+). Polymerizes chitin, a structural polymer of the cell wall and septum, by transferring the sugar moiety of UDP-GlcNAc to the non-reducing end of the growing chitin polymer. The protein is Chitin synthase 2 (CHS2) of Rhizopus oligosporus (Rhizopus microsporus var. oligosporus).